A 335-amino-acid chain; its full sequence is 4-hydroxy-3-methylbut-2-enyl diphosphate reductase (335 aa).

Cys14 is a [4Fe-4S] cluster binding site. (2E)-4-hydroxy-3-methylbut-2-enyl diphosphate is bound by residues His43 and His81. Dimethylallyl diphosphate-binding residues include His43 and His81. 2 residues coordinate isopentenyl diphosphate: His43 and His81. A [4Fe-4S] cluster-binding site is contributed by Cys103. His132 is a (2E)-4-hydroxy-3-methylbut-2-enyl diphosphate binding site. His132 contacts dimethylallyl diphosphate. His132 lines the isopentenyl diphosphate pocket. The active-site Proton donor is the Glu134. Thr179 is a binding site for (2E)-4-hydroxy-3-methylbut-2-enyl diphosphate. Cys209 serves as a coordination point for [4Fe-4S] cluster. Residues Ser237, Ser238, Asn239, and Ser285 each contribute to the (2E)-4-hydroxy-3-methylbut-2-enyl diphosphate site. Residues Ser237, Ser238, Asn239, and Ser285 each contribute to the dimethylallyl diphosphate site. Residues Ser237, Ser238, Asn239, and Ser285 each contribute to the isopentenyl diphosphate site.

The protein belongs to the IspH family. Requires [4Fe-4S] cluster as cofactor.

The enzyme catalyses isopentenyl diphosphate + 2 oxidized [2Fe-2S]-[ferredoxin] + H2O = (2E)-4-hydroxy-3-methylbut-2-enyl diphosphate + 2 reduced [2Fe-2S]-[ferredoxin] + 2 H(+). It carries out the reaction dimethylallyl diphosphate + 2 oxidized [2Fe-2S]-[ferredoxin] + H2O = (2E)-4-hydroxy-3-methylbut-2-enyl diphosphate + 2 reduced [2Fe-2S]-[ferredoxin] + 2 H(+). The protein operates within isoprenoid biosynthesis; dimethylallyl diphosphate biosynthesis; dimethylallyl diphosphate from (2E)-4-hydroxy-3-methylbutenyl diphosphate: step 1/1. It participates in isoprenoid biosynthesis; isopentenyl diphosphate biosynthesis via DXP pathway; isopentenyl diphosphate from 1-deoxy-D-xylulose 5-phosphate: step 6/6. Its function is as follows. Catalyzes the conversion of 1-hydroxy-2-methyl-2-(E)-butenyl 4-diphosphate (HMBPP) into a mixture of isopentenyl diphosphate (IPP) and dimethylallyl diphosphate (DMAPP). Acts in the terminal step of the DOXP/MEP pathway for isoprenoid precursor biosynthesis. This Deinococcus radiodurans (strain ATCC 13939 / DSM 20539 / JCM 16871 / CCUG 27074 / LMG 4051 / NBRC 15346 / NCIMB 9279 / VKM B-1422 / R1) protein is 4-hydroxy-3-methylbut-2-enyl diphosphate reductase.